The chain runs to 418 residues: Putative competence-damage inducible protein (418 aa).

This sequence belongs to the CinA family.

In Streptococcus pneumoniae serotype 19F (strain G54), this protein is Putative competence-damage inducible protein.